The sequence spans 341 residues: NADH-quinone oxidoreductase subunit H (341 aa).

9 helical membrane-spanning segments follow: residues 4–24 (LVNI…LTYF), 38–58 (PSVV…KLLI), 70–90 (ILFI…WAVI), 115–135 (VGVL…IIAG), 161–181 (IGLI…GEMV), 187–207 (MPFW…ISLL), 239–259 (LFFL…TIFF), 275–295 (IPGL…FIWI), and 314–334 (VFLP…LFTG).

This sequence belongs to the complex I subunit 1 family. As to quaternary structure, NDH-1 is composed of 14 different subunits. Subunits NuoA, H, J, K, L, M, N constitute the membrane sector of the complex.

The protein resides in the cell membrane. The catalysed reaction is a quinone + NADH + 5 H(+)(in) = a quinol + NAD(+) + 4 H(+)(out). Its function is as follows. NDH-1 shuttles electrons from NADH, via FMN and iron-sulfur (Fe-S) centers, to quinones in the respiratory chain. The immediate electron acceptor for the enzyme in this species is believed to be ubiquinone. Couples the redox reaction to proton translocation (for every two electrons transferred, four hydrogen ions are translocated across the cytoplasmic membrane), and thus conserves the redox energy in a proton gradient. This subunit may bind ubiquinone. The polypeptide is NADH-quinone oxidoreductase subunit H (Wolbachia pipientis wMel).